We begin with the raw amino-acid sequence, 1408 residues long: Protein patched homolog 1 (1408 aa).

A disordered region spans residues 1–20 (MLTLLEPPGAKRSPTVGNYN). Over 1–136 (MLTLLEPPGA…GNTVHRNAWS (136 aa)) the chain is Cytoplasmic. A helical membrane pass occupies residues 137–157 (IILAVSMIFAVCCYGLQYVHI). The Extracellular segment spans residues 158–649 (ETDIVKLWVA…STSIADMLEE (492 aa)). The interval 455-479 (STAPIPTTTTLSPEEARAAEEKEKK) is disordered. The span at 468–479 (EEARAAEEKEKK) shows a compositional bias: basic and acidic residues. N-linked (GlcNAc...) asparagine glycosylation is present at N599. The chain crosses the membrane as a helical span at residues 650-670 (FCQFNYTIILAGYALMLAYAI). The SSD domain occupies 654-816 (NYTIILAGYA…LTIYPAIISI (163 aa)). At 671-686 (VTQARFDNCLPATESS) the chain is on the cytoplasmic side. The chain crosses the membrane as a helical span at residues 687–707 (MGLALAGVLVVTFASVAGLGL). The Extracellular segment spans residues 708–709 (AT). A helical transmembrane segment spans residues 710-730 (WFGIEFNAATTQIVPFLTLGI). The Cytoplasmic segment spans residues 731 to 765 (GVDNMFMLLHNYRDVVKLAGGHAEMAILMRETGMS). A helical transmembrane segment spans residues 766–786 (ILCTSINNILSFLTGTLLPIP). Residues 787–795 (ALRSFCAQS) lie on the Extracellular side of the membrane. A helical transmembrane segment spans residues 796–816 (SILLTFNFIAILTIYPAIISI). Residues 817–901 (DLRRKKAQRR…YYYIPFISKP (85 aa)) lie on the Cytoplasmic side of the membrane. A helical membrane pass occupies residues 902 to 922 (ASKVAIIVGCCALLGASFIGM). Residues 923–1175 (RQSTLGLELG…QGIAFTFWEQ (253 aa)) lie on the Extracellular side of the membrane. 2 N-linked (GlcNAc...) asparagine glycosylation sites follow: N1026 and N1036. Residues 1176-1196 (YLFLTGNLMQAISIITISVFC) traverse the membrane as a helical segment. Topologically, residues 1197–1217 (VISVLLFNPWAALMVVCILGI) are cytoplasmic. The next 2 membrane-spanning stretches (helical) occupy residues 1218–1238 (MTCELAGFMGLVGIKLNPVSA) and 1239–1259 (VTLITAVGIGVEFTVHVVVSF). The Extracellular portion of the chain corresponds to 1260-1276 (LTALGTRSQRTSSAVDR). A helical transmembrane segment spans residues 1277-1297 (VFVPVIHGSFSTLLGILMLGF). At 1298–1305 (SEFEFVVK) the chain is on the cytoplasmic side. Residues 1306–1326 (YFFIVMTALICIGIINGLILL) traverse the membrane as a helical segment. Residues 1327 to 1408 (PVLLSWFGPR…GNNTRRLPAV (82 aa)) are Extracellular-facing. The segment at 1342–1408 (TGGKTTLTLP…GNNTRRLPAV (67 aa)) is disordered. Positions 1387-1408 (TTRTSGGNRGTVGNNTRRLPAV) are enriched in low complexity.

The protein belongs to the patched family. As to expression, germ line and its progenitors.

It localises to the membrane. In terms of biological role, required but not essential for cytokinesis of mitotically proliferating germ cells. This Caenorhabditis elegans protein is Protein patched homolog 1 (ptc-1).